We begin with the raw amino-acid sequence, 172 residues long: 3-phenylpropionate/cinnamic acid dioxygenase subunit beta (172 aa).

The protein belongs to the bacterial ring-hydroxylating dioxygenase beta subunit family. As to quaternary structure, this dioxygenase system consists of four proteins: the two subunits of the hydroxylase component (HcaE and HcaF), a ferredoxin (HcaC) and a ferredoxin reductase (HcaD).

The catalysed reaction is 3-phenylpropanoate + NADH + O2 + H(+) = 3-(cis-5,6-dihydroxycyclohexa-1,3-dien-1-yl)propanoate + NAD(+). The enzyme catalyses (E)-cinnamate + NADH + O2 + H(+) = (2E)-3-(cis-5,6-dihydroxycyclohexa-1,3-dien-1-yl)prop-2-enoate + NAD(+). The protein operates within aromatic compound metabolism; 3-phenylpropanoate degradation. Functionally, part of the multicomponent 3-phenylpropionate dioxygenase. Converts 3-phenylpropionic acid (PP) and cinnamic acid (CI) into 3-phenylpropionate-dihydrodiol (PP-dihydrodiol) and cinnamic acid-dihydrodiol (CI-dihydrodiol), respectively. This chain is 3-phenylpropionate/cinnamic acid dioxygenase subunit beta, found in Escherichia coli O139:H28 (strain E24377A / ETEC).